A 24-amino-acid chain; its full sequence is Brevinin-1PTa (24 aa).

A disulfide bond links cysteine 18 and cysteine 24.

Expressed by the skin glands.

It is found in the secreted. Has antibacterial activity against the Gram-positive bacterium S.aureus ATCC 25923 (MIC=3 uM) and the Gram-negative bacterium E.coli ATCC 25726 (MIC=24 uM). In Pulchrana picturata (Malaysian fire frog), this protein is Brevinin-1PTa.